Here is a 533-residue protein sequence, read N- to C-terminus: uncharacterized protein (533 aa).

The next 4 membrane-spanning stretches (helical) occupy residues 1–21, 135–155, 193–213, and 472–492; these read MLAF…VAFI, LPRF…IAAL, AIAA…AILA, and LLVN…PLVG.

The protein localises to the cell membrane. This is an uncharacterized protein from Mycobacterium bovis (strain ATCC BAA-935 / AF2122/97).